Reading from the N-terminus, the 144-residue chain is D-aminoacyl-tRNA deacylase (144 aa).

The Gly-cisPro motif, important for rejection of L-amino acids motif lies at Gly137–Pro138.

Belongs to the DTD family. Homodimer.

Its subcellular location is the cytoplasm. The catalysed reaction is glycyl-tRNA(Ala) + H2O = tRNA(Ala) + glycine + H(+). It catalyses the reaction a D-aminoacyl-tRNA + H2O = a tRNA + a D-alpha-amino acid + H(+). In terms of biological role, an aminoacyl-tRNA editing enzyme that deacylates mischarged D-aminoacyl-tRNAs. Also deacylates mischarged glycyl-tRNA(Ala), protecting cells against glycine mischarging by AlaRS. Acts via tRNA-based rather than protein-based catalysis; rejects L-amino acids rather than detecting D-amino acids in the active site. By recycling D-aminoacyl-tRNA to D-amino acids and free tRNA molecules, this enzyme counteracts the toxicity associated with the formation of D-aminoacyl-tRNA entities in vivo and helps enforce protein L-homochirality. The sequence is that of D-aminoacyl-tRNA deacylase from Marinomonas sp. (strain MWYL1).